A 744-amino-acid chain; its full sequence is MEGPEIQFAEATIDNGRFGTRTVRFETGRLAKQAAGAVLATLDEDTVVLSTTAAGKHPKEQFDFFPLTVDVEERQYAAGKIPGSFFRREGRPSTEAILACRLIDRPLRPLFVKGLRNEVQVVETILAIHPDDSYDVLAINAASASTQISGLPFSGPVGGVRVALIDGTWVGFPRYSEKERAVFDMVVAGRVVGDDVAITMVEAEATDNAWELIKGEGAGAPTEEVVAEGLEAAKPFIRALCEAQAALASRAAKEVQVFPVFPEYEPDAYDAVEQQVADHLDAALRIADKQERESRLDEIKDAAVGALQAGFDGREKELSAAYRALTKKFIRRHILTDSFRIDGRGLKDIRPLTAEVEVLPRVHGSALFERGETQILGVTTLNMLKMEQQLDTLSPVSRKRYMHNYNFPPYSTGETGRVGSPKRREIGHGALAERALVPVLPARDEFPYAIRQVSEALSSNGSTSMGSVCASTLSMLNAGVPLRAPVAGIAMGLVSDEVDGETRYATLTDILGAEDAFGDMDFKVAGTREFVTAIQLDTKLDGIPASVLAGALSQAREARLHILDVMAEAIDTPDEMAATAPRVITVQVPVDKIGEVIGPKGKMINQIQDDTGADISIEDDGTVFIGATDGPSAEAARQAINAIANPHMPEVGERFVGTVVKTTSFGAFVSLTPGKDGLLHISQIRRLVGGKRVENVEDVLGVGQKVQVEIAEIDPRGKLSLHAVVEETPADDAPAEASTATADA.

2 residues coordinate Mg(2+): Asp515 and Asp521. One can recognise a KH domain in the interval 581–640 (PRVITVQVPVDKIGEVIGPKGKMINQIQDDTGADISIEDDGTVFIGATDGPSAEAARQAI). One can recognise an S1 motif domain in the interval 652-724 (GERFVGTVVK…PRGKLSLHAV (73 aa)).

This sequence belongs to the polyribonucleotide nucleotidyltransferase family. Mg(2+) serves as cofactor.

The protein resides in the cytoplasm. The catalysed reaction is RNA(n+1) + phosphate = RNA(n) + a ribonucleoside 5'-diphosphate. Involved in mRNA degradation. Catalyzes the phosphorolysis of single-stranded polyribonucleotides processively in the 3'- to 5'-direction. The polypeptide is Polyribonucleotide nucleotidyltransferase (Beutenbergia cavernae (strain ATCC BAA-8 / DSM 12333 / CCUG 43141 / JCM 11478 / NBRC 16432 / NCIMB 13614 / HKI 0122)).